A 425-amino-acid polypeptide reads, in one-letter code: Trigger factor (425 aa).

The PPIase FKBP-type domain occupies 158–231 (GDLVRISMEV…VQEVYRRTLP (74 aa)).

It belongs to the FKBP-type PPIase family. Tig subfamily.

It localises to the cytoplasm. It carries out the reaction [protein]-peptidylproline (omega=180) = [protein]-peptidylproline (omega=0). Functionally, involved in protein export. Acts as a chaperone by maintaining the newly synthesized protein in an open conformation. Functions as a peptidyl-prolyl cis-trans isomerase. The sequence is that of Trigger factor from Thermotoga neapolitana (strain ATCC 49049 / DSM 4359 / NBRC 107923 / NS-E).